A 289-amino-acid polypeptide reads, in one-letter code: Heme oxygenase 1, chloroplastic (289 aa).

Residues 1–64 (MAPAAASLTA…SASSSRRMVV (64 aa)) constitute a chloroplast transit peptide. His-96 provides a ligand contact to heme b.

This sequence belongs to the heme oxygenase family.

It is found in the plastid. It localises to the chloroplast. The enzyme catalyses heme b + 3 reduced [NADPH--hemoprotein reductase] + 3 O2 = biliverdin IXalpha + CO + Fe(2+) + 3 oxidized [NADPH--hemoprotein reductase] + 3 H2O + H(+). Functionally, catalyzes the opening of the heme ring to form the open-chain tetrapyrrole biliverdin IX with the release of iron and carbon monoxide (CO). Is a key enzyme in the synthesis of the chromophore of the phytochrome family of plant photoreceptors. Essential for photoperiod response and repression of flowering through cytochromes that inhibit flowering by affecting both HD1 and EHD1 flowering pathways. The chain is Heme oxygenase 1, chloroplastic (HO1) from Oryza sativa subsp. japonica (Rice).